Consider the following 635-residue polypeptide: Probable ethylene response sensor 2 (635 aa).

Transmembrane regions (helical) follow at residues 24 to 44, 59 to 79, and 94 to 114; these read ISDFFIALAYFSIPLELIYFV, FGAFIVLCGATHLINLWTFAI, and ATAVVSCITALMLVHIIPDLL. Residues Cys-66 and His-70 each coordinate Cu cation. In terms of domain architecture, GAF spans 159 to 308; sequence DRHTILRTTL…VVADQVAVAL (150 aa). A Histidine kinase domain is found at 351–589; the sequence is VMNHEMRTPM…MFFVKLGMPE (239 aa). His-354 bears the Phosphohistidine; by autocatalysis mark.

The protein belongs to the ethylene receptor family. In terms of assembly, homodimer. Cu cation serves as cofactor. In terms of tissue distribution, expressed in anthers and hulls.

It is found in the endoplasmic reticulum membrane. The catalysed reaction is ATP + protein L-histidine = ADP + protein N-phospho-L-histidine.. Functionally, ethylene receptor related to bacterial two-component regulators. Acts as a negative regulator of ethylene signaling. May play a role in the regulation of flowering by up-regulating GI (GIGANTEA) and RCN1 and regulate starch accumulation by down-regulating the alpha-amylase AMY3D. This Oryza sativa subsp. indica (Rice) protein is Probable ethylene response sensor 2.